We begin with the raw amino-acid sequence, 171 residues long: Transcriptional repressor NrdR (171 aa).

The span at 1–10 (MQCPHCHHNG) shows a compositional bias: basic residues. Residues 1 to 21 (MQCPHCHHNGSRVVDSRPTDD) are disordered. Residues 3 to 34 (CPHCHHNGSRVVDSRPTDDGRVIRRRRECENC) fold into a zinc finger. One can recognise an ATP-cone domain in the interval 49–139 (LLVIKKNGAR…VYRQFKDMHV (91 aa)). The segment at 152-171 (KVKLAKPSAKTTHAPKRKKD) is disordered.

This sequence belongs to the NrdR family. Zn(2+) is required as a cofactor.

Functionally, negatively regulates transcription of bacterial ribonucleotide reductase nrd genes and operons by binding to NrdR-boxes. This is Transcriptional repressor NrdR from Lactiplantibacillus plantarum (strain ATCC BAA-793 / NCIMB 8826 / WCFS1) (Lactobacillus plantarum).